The sequence spans 317 residues: Transcriptional regulator LsrR (317 aa).

Residues 33-56 (QSEISDRLGLTRLKVSRLLEKGHQ) constitute a DNA-binding region (H-T-H motif).

This sequence belongs to the SorC transcriptional regulatory family.

The protein localises to the cytoplasm. With respect to regulation, inactivated by phosphorylated autoinducer-2 (phospho-AI-2). Phospho-AI-2 acts by binding to LsrR, which is then unable to bind to the promoter regions, allowing the transcription of the target genes. Functionally, transcriptional regulator that represses the expression of the lsr operon in the absence of the quorum-sensing signaling molecule autoinducer 2 (AI-2). It also represses the expression of the lsrRK operon. Acts by binding directly to the lsrA and lsrR promoter regions. In the presence of phosphorylated autoinducer-2 (phospho-AI-2), LsrR is inactivated, leading to the transcription of the genes. The polypeptide is Transcriptional regulator LsrR (lsrR) (Escherichia coli O157:H7).